A 405-amino-acid chain; its full sequence is uncharacterized protein (405 aa).

The next 13 helical transmembrane spans lie at 19-39 (IVSI…PLAV), 48-68 (MGFS…ATLL), 85-105 (IVVF…LADI), 106-126 (ASAW…ILGI), 129-149 (SFAG…LHIG), 156-176 (GIVT…CYAW), 178-198 (GLQG…LLAL), 224-244 (GMAL…ITLF), 252-272 (GAAF…LLFP), 283-303 (VAMI…TAAM), 309-329 (IGVL…GVVA), 344-364 (TYTV…GLVM), and 366-386 (WAGV…ALLL).

Belongs to the major facilitator superfamily. YhhS family.

It is found in the cell inner membrane. This is an uncharacterized protein from Salmonella enteritidis PT4 (strain P125109).